Consider the following 179-residue polypeptide: Large ribosomal subunit protein uL5 (179 aa).

This sequence belongs to the universal ribosomal protein uL5 family. In terms of assembly, part of the 50S ribosomal subunit; part of the 5S rRNA/L5/L18/L25 subcomplex. Contacts the 5S rRNA and the P site tRNA. Forms a bridge to the 30S subunit in the 70S ribosome.

Its function is as follows. This is one of the proteins that bind and probably mediate the attachment of the 5S RNA into the large ribosomal subunit, where it forms part of the central protuberance. In the 70S ribosome it contacts protein S13 of the 30S subunit (bridge B1b), connecting the 2 subunits; this bridge is implicated in subunit movement. Contacts the P site tRNA; the 5S rRNA and some of its associated proteins might help stabilize positioning of ribosome-bound tRNAs. The chain is Large ribosomal subunit protein uL5 from Shewanella denitrificans (strain OS217 / ATCC BAA-1090 / DSM 15013).